A 292-amino-acid polypeptide reads, in one-letter code: Pyridoxal 5'-phosphate synthase subunit PdxS (292 aa).

Position 22 (aspartate 22) interacts with D-ribose 5-phosphate. The Schiff-base intermediate with D-ribose 5-phosphate role is filled by lysine 79. Glycine 151 is a D-ribose 5-phosphate binding site. Arginine 163 is a binding site for D-glyceraldehyde 3-phosphate. D-ribose 5-phosphate-binding positions include glycine 212 and 233–234 (GS).

It belongs to the PdxS/SNZ family. In the presence of PdxT, forms a dodecamer of heterodimers.

It carries out the reaction aldehydo-D-ribose 5-phosphate + D-glyceraldehyde 3-phosphate + L-glutamine = pyridoxal 5'-phosphate + L-glutamate + phosphate + 3 H2O + H(+). It participates in cofactor biosynthesis; pyridoxal 5'-phosphate biosynthesis. Functionally, catalyzes the formation of pyridoxal 5'-phosphate from ribose 5-phosphate (RBP), glyceraldehyde 3-phosphate (G3P) and ammonia. The ammonia is provided by the PdxT subunit. Can also use ribulose 5-phosphate and dihydroxyacetone phosphate as substrates, resulting from enzyme-catalyzed isomerization of RBP and G3P, respectively. The chain is Pyridoxal 5'-phosphate synthase subunit PdxS from Caldanaerobacter subterraneus subsp. tengcongensis (strain DSM 15242 / JCM 11007 / NBRC 100824 / MB4) (Thermoanaerobacter tengcongensis).